The chain runs to 902 residues: Histone-lysine N-methyltransferase CLF (902 aa).

Over residues 1–14 the composition is skewed to low complexity; the sequence is MASEASPSSSATRS. Disordered regions lie at residues 1–33, 73–107, and 335–522; these read MASE…KEVS, SMER…SNNN, and GKTG…FMGE. Composition is skewed to basic and acidic residues over residues 15-33 and 78-95; these read EPPK…KEVS and GSCK…RDSP. The segment covering 337–357 has biased composition (polar residues); it reads TGTSSDGAGTKTTPTKFSSKL. A compositionally biased stretch (low complexity) spans 394–403; sequence DKVSSSPKVK. Over residues 404 to 416 the composition is skewed to basic residues; it reads GSGRRVGRKRNKN. The span at 438–449 shows a compositional bias: low complexity; sequence SDSIASGSCSPS. Residues 459-473 show a composition bias toward polar residues; that stretch reads ATSSSQKHVKSGNSG. An SANT domain is found at 531-581; sequence TNKLWRPLEKSLFDKGVEIFGMNSCLIARNLLSGFKSCWEVFQYMTCSENK. The CXC domain maps to 638 to 737; sequence RKRITEKKDQ…SLGVPSQRGD (100 aa). Residues 752–867 enclose the SET domain; that stretch reads QRVLLGISDV…AGEELFYDYR (116 aa). Tyrosine 866 provides a ligand contact to S-adenosyl-L-methionine. Over residues 875–890 the composition is skewed to basic and acidic residues; that stretch reads AWAKKPEAPGSKKDEN. Residues 875-902 are disordered; it reads AWAKKPEAPGSKKDENVTPSVGRPKKLA.

Belongs to the class V-like SAM-binding methyltransferase superfamily. Histone-lysine methyltransferase family. EZ subfamily. Probable component of a PcG complex. In plants, PcG complexes are probably composed of a member of the EZ family (CLF or MEA), FIE, and a member of the VEFS family (FIS2, VRN2 or EMF2). Interacts with FIE. Interacts with RING1A. Binds to ALP1. Interacts with BLI. Binds to ATX1 in the nucleus. Interacts with EOL1. Interacts (via SANT domain) with HXK1 in the nucleus. In terms of tissue distribution, strongly expressed throughout the apical meristem, leaf primordia, and leaves of 7-8 day-old seedling. Weakly expressed in the vasculature of hypocotyl. Strongly expressed throughout the young stages 1 and 2 floral meristems that arose on the flanks of the apex. In stage 3 and 4 flowers, it is expressed in the emerging sepal primordia and in the dome of the floral meristem. During stages 6 and 7, it is strongly expressed in developing petal and stamen, and weakly expressed in the sepals. Late in floral development, at stage 12, it is weakly expressed in all floral whorls, and expressed at intermediate level in petals and ovules.

It localises to the nucleus. It carries out the reaction L-lysyl-[histone] + S-adenosyl-L-methionine = N(6)-methyl-L-lysyl-[histone] + S-adenosyl-L-homocysteine + H(+). Polycomb group (PcG) protein. Catalytic subunit of some PcG multiprotein complex, which methylates 'Lys-27' of histone H3, leading to transcriptional repression of the affected target genes, mainly abscisic acid (ABA) responsive elements. Required to regulate floral development by repressing the AGAMOUS homeotic gene in leaves, inflorescence stems and flowers. Together with ATX1, modulates AG nucleosome methylation statement. Regulates the antero-posterior organization of the endosperm, as well as the division and elongation rates of leaf cells. PcG proteins act by forming multiprotein complexes, which are required to maintain the transcriptionally repressive state of homeotic genes throughout development. PcG proteins are not required to initiate repression, but to maintain it during later stages of development. Forms a nuclear complex with EZA1/SWN and HXK1 to target common glucose-responsive genes and regulate glucose signaling by glucose-mediated gene repression. Affects the recruitment of HXK1 to the target chromatin. This Arabidopsis thaliana (Mouse-ear cress) protein is Histone-lysine N-methyltransferase CLF.